The sequence spans 101 residues: DNA-binding protein Fis (101 aa).

The H-T-H motif DNA-binding region spans 77–96 (QTRAANMLGINRGTLRKKLK).

The protein belongs to the transcriptional regulatory Fis family. In terms of assembly, homodimer.

In terms of biological role, activates ribosomal RNA transcription. Plays a direct role in upstream activation of rRNA promoters. The chain is DNA-binding protein Fis from Shewanella denitrificans (strain OS217 / ATCC BAA-1090 / DSM 15013).